The primary structure comprises 318 residues: Protein OPG137 (318 aa).

A coiled-coil region spans residues 145 to 172 (VYDKDKRIQMLEDEVVNLRNQRSNTKSS).

It belongs to the orthopoxvirus OPG137 family. Homomultimer. Interacts with OPG160. Phosphorylated by a OPG054-independent mechanism.

The protein localises to the host cytoplasm. Functionally, required for viral crescent formation early during virus morphogenesis. This chain is Protein OPG137 (OPG137), found in Vaccinia virus (strain Ankara) (VACV).